A 391-amino-acid chain; its full sequence is Formate-dependent phosphoribosylglycinamide formyltransferase (391 aa).

Residues 20-21 (EL) and Glu80 contribute to the N(1)-(5-phospho-beta-D-ribosyl)glycinamide site. ATP contacts are provided by residues Arg112, Lys153, 158 to 163 (SSGKGQ), 193 to 196 (EGFV), and Glu201. Positions 117–306 (RLAAEELQLP…EFALHVRAFT (190 aa)) constitute an ATP-grasp domain. Glu265 and Glu277 together coordinate Mg(2+). N(1)-(5-phospho-beta-D-ribosyl)glycinamide is bound by residues Asp284, Lys354, and 361–362 (RR).

Belongs to the PurK/PurT family. In terms of assembly, homodimer.

It catalyses the reaction N(1)-(5-phospho-beta-D-ribosyl)glycinamide + formate + ATP = N(2)-formyl-N(1)-(5-phospho-beta-D-ribosyl)glycinamide + ADP + phosphate + H(+). The protein operates within purine metabolism; IMP biosynthesis via de novo pathway; N(2)-formyl-N(1)-(5-phospho-D-ribosyl)glycinamide from N(1)-(5-phospho-D-ribosyl)glycinamide (formate route): step 1/1. Involved in the de novo purine biosynthesis. Catalyzes the transfer of formate to 5-phospho-ribosyl-glycinamide (GAR), producing 5-phospho-ribosyl-N-formylglycinamide (FGAR). Formate is provided by PurU via hydrolysis of 10-formyl-tetrahydrofolate. This Aliivibrio fischeri (strain ATCC 700601 / ES114) (Vibrio fischeri) protein is Formate-dependent phosphoribosylglycinamide formyltransferase.